The following is a 300-amino-acid chain: Acetylglutamate kinase (300 aa).

Substrate contacts are provided by residues 68 to 69 (GG), R90, and N195.

It belongs to the acetylglutamate kinase family. ArgB subfamily.

Its subcellular location is the cytoplasm. The enzyme catalyses N-acetyl-L-glutamate + ATP = N-acetyl-L-glutamyl 5-phosphate + ADP. It participates in amino-acid biosynthesis; L-arginine biosynthesis; N(2)-acetyl-L-ornithine from L-glutamate: step 2/4. Catalyzes the ATP-dependent phosphorylation of N-acetyl-L-glutamate. The protein is Acetylglutamate kinase of Halorhodospira halophila (strain DSM 244 / SL1) (Ectothiorhodospira halophila (strain DSM 244 / SL1)).